The sequence spans 221 residues: Small ribosomal subunit protein uS3c (221 aa).

Residues 43 to 121 enclose the KH type-2 domain; sequence IQNYIQKNMR…KLKIAITKIA (79 aa).

It belongs to the universal ribosomal protein uS3 family. Part of the 30S ribosomal subunit.

The protein localises to the plastid. It localises to the chloroplast. In Jasminum nudiflorum (Winter jasmine), this protein is Small ribosomal subunit protein uS3c (rps3).